The primary structure comprises 150 residues: MAKKVVGSLKLQIKAGQANPSPPVGPALGQRGINIMEFCKAFNAKTQEMEQGAPVPVVITYYADKSFTFETKTPPASFLLKKAAGLKPQGKRNRAKGSEKPGRQTAGTVTAKQVREIAEAKMKDLSANDVEAAMQIILGSARSIGIEVKG.

Positions 83–111 (AAGLKPQGKRNRAKGSEKPGRQTAGTVTA) are disordered.

The protein belongs to the universal ribosomal protein uL11 family. Part of the ribosomal stalk of the 50S ribosomal subunit. Interacts with L10 and the large rRNA to form the base of the stalk. L10 forms an elongated spine to which L12 dimers bind in a sequential fashion forming a multimeric L10(L12)X complex. In terms of processing, one or more lysine residues are methylated.

Functionally, forms part of the ribosomal stalk which helps the ribosome interact with GTP-bound translation factors. This chain is Large ribosomal subunit protein uL11, found in Paracoccus denitrificans (strain Pd 1222).